Here is a 94-residue protein sequence, read N- to C-terminus: Integration host factor subunit beta (94 aa).

Belongs to the bacterial histone-like protein family. As to quaternary structure, heterodimer of an alpha and a beta chain.

In terms of biological role, this protein is one of the two subunits of integration host factor, a specific DNA-binding protein that functions in genetic recombination as well as in transcriptional and translational control. The protein is Integration host factor subunit beta of Brucella melitensis biotype 2 (strain ATCC 23457).